The chain runs to 234 residues: Carboxy-S-adenosyl-L-methionine synthase (234 aa).

Residues Tyr35, 60–62, 83–84, 109–110, Asn124, and Arg191 contribute to the S-adenosyl-L-methionine site; these read GCS, DN, and DI.

The protein belongs to the class I-like SAM-binding methyltransferase superfamily. Cx-SAM synthase family. As to quaternary structure, homodimer.

The catalysed reaction is prephenate + S-adenosyl-L-methionine = carboxy-S-adenosyl-L-methionine + 3-phenylpyruvate + H2O. Its function is as follows. Catalyzes the conversion of S-adenosyl-L-methionine (SAM) to carboxy-S-adenosyl-L-methionine (Cx-SAM). This is Carboxy-S-adenosyl-L-methionine synthase from Campylobacter hominis (strain ATCC BAA-381 / DSM 21671 / CCUG 45161 / LMG 19568 / NCTC 13146 / CH001A).